We begin with the raw amino-acid sequence, 196 residues long: HTH-type transcriptional regulator EcpR (196 aa).

An HTH luxR-type domain is found at 138–196 (KDIKKDKITDREMEIIRMTAQGMQPKSIARIENCSVKTVYTHRRNAEAKLYSKIYKLVQ). The H-T-H motif DNA-binding region spans 162 to 181 (PKSIARIENCSVKTVYTHRR).

Belongs to the EcpR/MatA family.

It localises to the cytoplasm. Its function is as follows. Part of the ecpRABCDE operon, which encodes the E.coli common pilus (ECP). ECP is found in both commensal and pathogenic strains and plays a dual role in early-stage biofilm development and host cell recognition. Positively regulates the expression of the ecp operon. The protein is HTH-type transcriptional regulator EcpR (ecpR) of Escherichia coli (strain K12 / DH10B).